The sequence spans 128 residues: Holo-[acyl-carrier-protein] synthase (128 aa).

Residues aspartate 10 and glutamate 59 each contribute to the Mg(2+) site.

Belongs to the P-Pant transferase superfamily. AcpS family. Requires Mg(2+) as cofactor.

It is found in the cytoplasm. It carries out the reaction apo-[ACP] + CoA = holo-[ACP] + adenosine 3',5'-bisphosphate + H(+). In terms of biological role, transfers the 4'-phosphopantetheine moiety from coenzyme A to a Ser of acyl-carrier-protein. The sequence is that of Holo-[acyl-carrier-protein] synthase from Syntrophotalea carbinolica (strain DSM 2380 / NBRC 103641 / GraBd1) (Pelobacter carbinolicus).